A 1061-amino-acid polypeptide reads, in one-letter code: Chimeric ERCC6-PGBD3 protein (1061 aa).

The tract at residues methionine 1 to glycine 39 is disordered. A compositionally biased stretch (polar residues) spans histidine 8–glutamate 27. A Phosphoserine modification is found at serine 158. Residue lysine 255 forms a Glycyl lysine isopeptide (Lys-Gly) (interchain with G-Cter in SUMO2) linkage. 4 disordered regions span residues lysine 287–lysine 323, glycine 344–serine 466, valine 494–leucine 521, and serine 537–arginine 573. Residues arginine 353–alanine 363 are compositionally biased toward basic and acidic residues. Acidic residues predominate over residues glutamate 364–glutamate 392. 2 positions are modified to phosphoserine: serine 429 and serine 430. Over residues arginine 451–lysine 462 the composition is skewed to basic and acidic residues. Residues serine 506–glycine 515 are compositionally biased toward acidic residues. At serine 554 the chain carries Phosphoserine.

As to expression, expressed in heart and oocytes, but not in granulosa cells (at protein level).

It is found in the nucleus. In terms of biological role, involved in repair of DNA damage following UV irradiation, acting either in the absence of ERCC6 or synergistically with ERCC6. Involved in the regulation of gene expression. In the absence of ERCC6, induces the expression of genes characteristic of interferon-like antiviral responses. This response is almost completely suppressed in the presence of ERCC6. In the presence of ERCC6, regulates the expression of genes involved in metabolism regulation, including IGFBP5 and IGFBP7. In vitro binds to PGBD3-related transposable elements, called MER85s; these non-autonomous 140 bp elements are characterized by the presence of PGBD3 terminal inverted repeats and the absence of internal transposase ORF. In Homo sapiens (Human), this protein is Chimeric ERCC6-PGBD3 protein.